Consider the following 117-residue polypeptide: Large ribosomal subunit protein uL18 (117 aa).

Belongs to the universal ribosomal protein uL18 family. In terms of assembly, part of the 50S ribosomal subunit; part of the 5S rRNA/L5/L18/L25 subcomplex. Contacts the 5S and 23S rRNAs.

Its function is as follows. This is one of the proteins that bind and probably mediate the attachment of the 5S RNA into the large ribosomal subunit, where it forms part of the central protuberance. The chain is Large ribosomal subunit protein uL18 from Actinobacillus pleuropneumoniae serotype 5b (strain L20).